The chain runs to 189 residues: UPF0316 protein Sca_1484 (189 aa).

3 consecutive transmembrane segments (helical) span residues 8–28, 40–60, and 66–86; these read PWLM…CLTV, VAAA…GLVM, and FQNI…GMKI.

This sequence belongs to the UPF0316 family.

The protein resides in the cell membrane. The protein is UPF0316 protein Sca_1484 of Staphylococcus carnosus (strain TM300).